Here is a 789-residue protein sequence, read N- to C-terminus: Potassium transporter 4 (789 aa).

Residues 1-32 (MAPAESGVSPRRNPSQLSWMNLSSNLILAYQS) lie on the Cytoplasmic side of the membrane. Ser9 bears the Phosphoserine mark. The helical transmembrane segment at 33–53 (FGVVYGDLSTSPLYVFPSTFI) threads the bilayer. Residues 54 to 68 (GKLHKHHNEDAVFGA) lie on the Extracellular side of the membrane. Residues 69–89 (FSLIFWTLTLIPLLKYLLVLL) traverse the membrane as a helical segment. At 90–154 (SADDNGEGGT…FLEKHKRLRT (65 aa)) the chain is on the cytoplasmic side. Residues 155–175 (ALLLVVLFGAAMVIGDGVLTP) traverse the membrane as a helical segment. Topologically, residues 176 to 195 (ALSVLSSLSGLQATEKNVTD) are extracellular. The chain crosses the membrane as a helical span at residues 196–216 (GELLVLACVILVGLFALQHCG). The Cytoplasmic portion of the chain corresponds to 217-219 (THR). A helical membrane pass occupies residues 220–240 (VAFMFAPIVIIWLISIFFIGL). Residues 241-270 (YNIIRWNPKIIHAVSPLYIIKFFRVTGQDG) lie on the Extracellular side of the membrane. Residues 271–291 (WISLGGVLLSVTGTEAMFANL) traverse the membrane as a helical segment. Topologically, residues 292–300 (GHFTSVSIR) are cytoplasmic. A helical transmembrane segment spans residues 301–321 (VAFAVVVYPCLVVQYMGQAAF). Topologically, residues 322 to 340 (LSKNLGSIPNSFYDSVPDP) are extracellular. The helical transmembrane segment at 341–361 (VFWPVFVIATLAAIVGSQAVI) threads the bilayer. Over 362-392 (TTTFSIIKQCHALGCFPRIKVVHTSKHIYGQ) the chain is Cytoplasmic. The helical transmembrane segment at 393 to 413 (IYIPEINWILMILTLAMAIGF) threads the bilayer. The Extracellular segment spans residues 414 to 424 (RDTTLIGNAYG). The helical transmembrane segment at 425–445 (IACMVVMFITTFFMALVIVVV) threads the bilayer. At 446 to 450 (WQKSC) the chain is on the cytoplasmic side. Residues 451–471 (FLAALFLGTLWIIEGVYLSAA) form a helical membrane-spanning segment. Residues 472-478 (LMKVTEG) are Extracellular-facing. Residues 479 to 499 (GWVPFVLTFIFMIAMYVWHYG) traverse the membrane as a helical segment. The Cytoplasmic portion of the chain corresponds to 500 to 789 (TRRKYSFDLH…LIEVGMIYYV (290 aa)).

Belongs to the HAK/KUP transporter (TC 2.A.72.3) family. As to expression, detected at very low levels in roots, stems, leaves and flowers of mature plants and strongly expressed in the roots of potassium-starved plants.

The protein resides in the cell membrane. Its function is as follows. High-affinity potassium transporter. This is Potassium transporter 4 (POT4) from Arabidopsis thaliana (Mouse-ear cress).